The primary structure comprises 176 residues: Ribosome maturation factor RimM (176 aa).

Positions 104–176 (EDEYYFYEIL…KIIAKEMEWI (73 aa)) constitute a PRC barrel domain.

Belongs to the RimM family. In terms of assembly, binds ribosomal protein uS19.

The protein resides in the cytoplasm. An accessory protein needed during the final step in the assembly of 30S ribosomal subunit, possibly for assembly of the head region. Essential for efficient processing of 16S rRNA. May be needed both before and after RbfA during the maturation of 16S rRNA. It has affinity for free ribosomal 30S subunits but not for 70S ribosomes. The chain is Ribosome maturation factor RimM from Thermotoga maritima (strain ATCC 43589 / DSM 3109 / JCM 10099 / NBRC 100826 / MSB8).